A 682-amino-acid chain; its full sequence is Epithelial sodium channel subunit alpha (682 aa).

Residues 1 to 111 (MLMRLLPLPS…CSKHNRMKTA (111 aa)) lie on the Cytoplasmic side of the membrane. The disordered stretch occupies residues 34 to 69 (AQGPLPPQPLQGPLKGDKCEQPGLGPEPTAPQQHTE). Residues 112–132 (FWAVLWLCTFGMMYWQFALLF) form a helical membrane-spanning segment. Topologically, residues 133-586 (GEYFSYPVSL…SQWSLWFGSS (454 aa)) are extracellular. 10 cysteine pairs are disulfide-bonded: Cys159–Cys329, Cys253–Cys260, Cys306–Cys313, Cys418–Cys503, Cys440–Cys480, Cys440–Cys499, Cys444–Cys495, Cys453–Cys480, Cys453–Cys503, and Cys455–Cys469. Asn191 is a glycosylation site (N-linked (GlcNAc...) asparagine). The interval 201 to 267 (RSRRSLADTL…SDCFYQTSSS (67 aa)) is gating release of inhibition by proteolysis (GRIP); protease-sensitive region that is responsible for the proteolytic activation of the channel. A disordered region spans residues 221 to 240 (PEPRRARSSDPSSVRDNNPR). Asn504 is a glycosylation site (N-linked (GlcNAc...) asparagine). Residues 587–607 (VLSVVEMAEFMFDLLVITLLM) traverse the membrane as a helical segment. Over 608 to 682 (LLRRFRSRYW…SSAACAPREP (75 aa)) the chain is Cytoplasmic. The PY motif; recruits WW domain-containing proteins and is thereby required for ubiquitination and inhibition of the channel by NEDD4 and NEDD4L signature appears at 653–657 (PPPAY).

Belongs to the amiloride-sensitive sodium channel (TC 1.A.6) family. SCNN1A subfamily. As to quaternary structure, heterotrimer; containing an alpha/SCNN1A, a beta/SCNN1B and a gamma/SCNN1G subunit. Interacts with WWP1 (via WW domains). Interacts with WWP2 (via WW domains); inhibits the channel. Interacts with BPIFA1; the interaction is indirect via SCNN1B and inhibits the proteolytic processing of SCNN1A and SCNN1G and the activation of ENaC. Interacts with the full-length immature form of PCSK9 (pro-PCSK9). Ubiquitinated. Can be ubiquitinated at multiple sites and undergo monoubiquitination and polyubiquitination. Ubiquitination by NEDD4 or NEDD4L inhibits the ENaC channel through endocytosis, intracellular retention and degradation of its individual subunits. In terms of processing, N-glycosylated. Post-translationally, ENaC is activated through the proteolytic maturation of its subunits. Furin cleaves the SCNN1A subunit, which results in a stepwise increase in the open probability of the channel due to the release of an inhibitory tract. BPIFA1, which is recruited by the SCNN1B subunit, prevents the proteolytic activation of ENaC.

The protein resides in the apical cell membrane. It localises to the cell projection. Its subcellular location is the cilium. The protein localises to the cytoplasmic granule. It is found in the cytoplasm. The protein resides in the cytoplasmic vesicle. It localises to the secretory vesicle. Its subcellular location is the acrosome. The protein localises to the flagellum. The enzyme catalyses Na(+)(in) = Na(+)(out). With respect to regulation, originally identified and characterized by its inhibition by the diuretic drug amiloride. Functionally, this is one of the three pore-forming subunits of the heterotrimeric epithelial sodium channel (ENaC), a critical regulator of sodium balance and fluid homeostasis. ENaC operates in epithelial tissues, where it mediates the electrodiffusion of sodium ions from extracellular fluid through the apical membrane of cells, with water following osmotically. It plays a key role in maintaining sodium homeostasis through electrogenic sodium reabsorption in the kidneys. Additionally, ENaC is essential for airway surface liquid homeostasis, which is crucial for proper mucus clearance. The polypeptide is Epithelial sodium channel subunit alpha (Cavia porcellus (Guinea pig)).